A 299-amino-acid chain; its full sequence is NmrA-like family domain-containing protein 1 (299 aa).

NADP(+) is bound by residues 11-16 (GATGAQ), 37-41 (RDPGQ), 58-59 (DQ), 79-81 (TNY), lysine 92, lysine 133, and 155-158 (YFEN). The interaction with ASS1 stretch occupies residues 153-189 (PCYFENLLSYFLPQKAPDGRSYLLSLPMGDVPIDGMS).

It belongs to the NmrA-type oxidoreductase family. In terms of assembly, homodimer. Interacts with ASS1. Interaction is enhanced by low NADPH/NADP(+) ratios, which results in inhibition of ASS1 activity.

Its subcellular location is the cytoplasm. It is found in the perinuclear region. The protein resides in the nucleus. In terms of biological role, redox sensor protein. Undergoes restructuring and subcellular redistribution in response to changes in intracellular NADPH/NADP(+) levels. At low NADPH concentrations the protein is found mainly as a monomer, and binds argininosuccinate synthase (ASS1), the enzyme involved in nitric oxide synthesis. Association with ASS1 impairs its activity and reduces the production of nitric oxide, which subsecuently prevents apoptosis. Under normal NADPH concentrations, the protein is found as a dimer and hides the binding site for ASS1. The homodimer binds one molecule of NADPH. Has higher affinity for NADPH than for NADP(+). Binding to NADPH is necessary to form a stable dimer. This is NmrA-like family domain-containing protein 1 (NMRAL1) from Bos taurus (Bovine).